Here is a 277-residue protein sequence, read N- to C-terminus: Digeranylgeranylglyceryl phosphate synthase (277 aa).

Transmembrane regions (helical) follow at residues 16–36, 40–60, 93–113, 129–149, 153–173, 199–218, 222–244, and 253–273; these read ILAG…IPPV, ILIF…NDYF, FIGL…ALGA, FIGN…GAVG, IDLA…REIM, SGII…FLPV, IGLG…IDVL, and GQKI…LGAL.

It belongs to the UbiA prenyltransferase family. DGGGP synthase subfamily. The cofactor is Mg(2+).

The protein resides in the cell membrane. It catalyses the reaction sn-3-O-(geranylgeranyl)glycerol 1-phosphate + (2E,6E,10E)-geranylgeranyl diphosphate = 2,3-bis-O-(geranylgeranyl)-sn-glycerol 1-phosphate + diphosphate. It functions in the pathway membrane lipid metabolism; glycerophospholipid metabolism. Functionally, prenyltransferase that catalyzes the transfer of the geranylgeranyl moiety of geranylgeranyl diphosphate (GGPP) to the C2 hydroxyl of (S)-3-O-geranylgeranylglyceryl phosphate (GGGP). This reaction is the second ether-bond-formation step in the biosynthesis of archaeal membrane lipids. The protein is Digeranylgeranylglyceryl phosphate synthase of Pyrococcus horikoshii (strain ATCC 700860 / DSM 12428 / JCM 9974 / NBRC 100139 / OT-3).